Reading from the N-terminus, the 605-residue chain is Aspartate--tRNA(Asp/Asn) ligase (605 aa).

Glu-172 lines the L-aspartate pocket. The segment at 196-199 is aspartate; it reads QLFK. Arg-218 is a binding site for L-aspartate. ATP is bound by residues 218–220 and Gln-227; that span reads RDE. His-455 contacts L-aspartate. Glu-489 is a binding site for ATP. Arg-496 contacts L-aspartate. 541 to 544 provides a ligand contact to ATP; that stretch reads GLDR.

The protein belongs to the class-II aminoacyl-tRNA synthetase family. Type 1 subfamily. As to quaternary structure, homodimer.

The protein localises to the cytoplasm. It carries out the reaction tRNA(Asx) + L-aspartate + ATP = L-aspartyl-tRNA(Asx) + AMP + diphosphate. Functionally, aspartyl-tRNA synthetase with relaxed tRNA specificity since it is able to aspartylate not only its cognate tRNA(Asp) but also tRNA(Asn). Reaction proceeds in two steps: L-aspartate is first activated by ATP to form Asp-AMP and then transferred to the acceptor end of tRNA(Asp/Asn). The protein is Aspartate--tRNA(Asp/Asn) ligase of Ralstonia nicotianae (strain ATCC BAA-1114 / GMI1000) (Ralstonia solanacearum).